A 165-amino-acid chain; its full sequence is Chorismate pyruvate-lyase (165 aa).

Substrate is bound by residues Met35, Arg77, Leu115, and Glu156.

It belongs to the UbiC family. In terms of assembly, monomer.

The protein localises to the cytoplasm. The catalysed reaction is chorismate = 4-hydroxybenzoate + pyruvate. Its pathway is cofactor biosynthesis; ubiquinone biosynthesis. In terms of biological role, removes the pyruvyl group from chorismate, with concomitant aromatization of the ring, to provide 4-hydroxybenzoate (4HB) for the ubiquinone pathway. This Salmonella enteritidis PT4 (strain P125109) protein is Chorismate pyruvate-lyase.